The primary structure comprises 414 residues: Putative competence-damage inducible protein (414 aa).

The protein belongs to the CinA family.

The polypeptide is Putative competence-damage inducible protein (Geobacillus kaustophilus (strain HTA426)).